We begin with the raw amino-acid sequence, 580 residues long: Methyl-CpG-binding domain protein 4 (580 aa).

Residues 1-36 (MGTTGLESLSLGDRGAAPTVTSSERLVPDPPNDLRK) are disordered. The MBD domain maps to 76 to 148 (ATAGTECRKS…EDFDFTVLSK (73 aa)). Ser318 and Ser428 each carry phosphoserine. The active site involves Asp560.

As to quaternary structure, interacts with MLH1.

The protein resides in the nucleus. Mismatch-specific DNA N-glycosylase involved in DNA repair. Has thymine glycosylase activity and is specific for G:T mismatches within methylated and unmethylated CpG sites. Can also remove uracil or 5-fluorouracil in G:U mismatches. Has no lyase activity. Was first identified as methyl-CpG-binding protein. The sequence is that of Methyl-CpG-binding domain protein 4 from Homo sapiens (Human).